Here is a 535-residue protein sequence, read N- to C-terminus: Inositol 1,4,5-trisphosphate receptor-interacting protein-like 2 (535 aa).

The signal sequence occupies residues 1-38; that stretch reads MSVHYTLNLRVFWPLVTGLCTALVCLYHVLRGSGGARA. Over 39–43 the chain is Extracellular; that stretch reads EPADG. Residues 44–64 form a helical membrane-spanning segment; that stretch reads VDGGFPLLKVAVLLLLSYVLL. The Cytoplasmic portion of the chain corresponds to 65–535; that stretch reads RCRHAVRQRF…RTQGFLEGEP (471 aa). S139 carries the post-translational modification Phosphoserine.

This sequence belongs to the ITPRIP family.

The protein resides in the membrane. The protein is Inositol 1,4,5-trisphosphate receptor-interacting protein-like 2 (ITPRIPL2) of Homo sapiens (Human).